The sequence spans 866 residues: DNA mismatch repair protein MutS (866 aa).

Position 618 to 625 (618 to 625) interacts with ATP; sequence GPNMSGKS.

The protein belongs to the DNA mismatch repair MutS family.

This protein is involved in the repair of mismatches in DNA. It is possible that it carries out the mismatch recognition step. This protein has a weak ATPase activity. This Flavobacterium psychrophilum (strain ATCC 49511 / DSM 21280 / CIP 103535 / JIP02/86) protein is DNA mismatch repair protein MutS.